A 132-amino-acid chain; its full sequence is Small ribosomal subunit protein uS8 (132 aa).

It belongs to the universal ribosomal protein uS8 family. Part of the 30S ribosomal subunit. Contacts proteins S5 and S12.

Its function is as follows. One of the primary rRNA binding proteins, it binds directly to 16S rRNA central domain where it helps coordinate assembly of the platform of the 30S subunit. The sequence is that of Small ribosomal subunit protein uS8 from Clostridium kluyveri (strain NBRC 12016).